The following is a 181-amino-acid chain: Protein TrbB (181 aa).

Residues 1-22 (MSLTKSLLFTLLLSAAAVQAST) form the signal peptide. Positions 37–172 (TQPAQPAAGT…FMARVDTVLQ (136 aa)) constitute a Thioredoxin domain.

The protein localises to the periplasm. The chain is Protein TrbB (trbB) from Escherichia coli (strain K12).